The sequence spans 568 residues: Hexose transporter 1 (568 aa).

At 1 to 32 (MATEEMREKSLKREAESLWDIPPESYASKACS) the chain is on the cytoplasmic side. A helical transmembrane segment spans residues 33–53 (CMGTAAQLVMVAVLGSFQFGF). The Extracellular portion of the chain corresponds to 54–86 (NLSALNTSKAFIILDFGWCKDENGGHYSDCDTG). The cysteines at positions 72 and 83 are disulfide-linked. The helical transmembrane segment at 87 to 107 (LVYGSLINTAVFLGACVGCLL) threads the bilayer. Residues 108–119 (GGRLTDFGRRAS) lie on the Cytoplasmic side of the membrane. A helical transmembrane segment spans residues 120–140 (LIFTHCVCTLGCILSAAAEGF). Over 141-142 (PT) the chain is Extracellular. A helical transmembrane segment spans residues 143–163 (LLIARLVVGVAVGMFTVCVPM). The Cytoplasmic portion of the chain corresponds to 164–182 (YLSEVTPDDRRGYFGTFHQ). Gln182 contributes to the alpha-D-glucose binding site. Gln182 contributes to the beta-D-glucose binding site. A helical transmembrane segment spans residues 183–203 (LFITLGIFFGTLLGLAFGNAP). Residues 204-220 (AGDEVYEVSTFQQAWWR) lie on the Extracellular side of the membrane. The helical transmembrane segment at 221 to 241 (VMLGLPAVVSLLAIWLLWFVF) threads the bilayer. Over 242-306 (PFETPQYMVE…KAIVHPTYRS (65 aa)) the chain is Cytoplasmic. The chain crosses the membrane as a helical span at residues 307–327 (VILLACLLSIMQQFTGINVLV). Gln318, Gln319, and Asn324 together coordinate alpha-D-glucose. Gln318 contributes to the beta-D-glucose binding site. Residue Asn324 coordinates beta-D-glucose. Over 328–345 (ANSNNLYSSLKLPQDAVT) the chain is Extracellular. Residues 346–366 (GLTVGFTALNVFLTVITIPLV) form a helical membrane-spanning segment. Residue Asn355 coordinates beta-D-glucose. The Cytoplasmic portion of the chain corresponds to 367-374 (DRLGRRTL). The chain crosses the membrane as a helical span at residues 375-395 (LLFSEAVMFVAMGIAFVANLV). Over 396-406 (DQSNTAVQWVT) the chain is Extracellular. A helical membrane pass occupies residues 407-427 (VACVYVFIVGFAVGYGPVLWI). Trp426 contacts alpha-D-glucose. The Cytoplasmic portion of the chain corresponds to 428–443 (YIHEIFPPEIKQGAAS). A helical membrane pass occupies residues 444–464 (LASALNWVATVAIVLPSDFLL). Topologically, residues 465–469 (KQGFS) are extracellular. A helical membrane pass occupies residues 470 to 490 (VFVGICTVALAIIFVVTFIFV). At 491 to 568 (KETKGLSIEE…DDLTKGTEVV (78 aa)) the chain is on the cytoplasmic side.

The protein belongs to the major facilitator superfamily. Sugar transporter (TC 2.A.1.1) family. In terms of assembly, homodimer.

It is found in the cell membrane. It carries out the reaction D-glucose(out) = D-glucose(in). The catalysed reaction is D-fructose(out) = D-fructose(in). The enzyme catalyses D-galactose(in) = D-galactose(out). It catalyses the reaction D-mannose(out) = D-mannose(in). It carries out the reaction D-glucosamine(out) = D-glucosamine(in). The catalysed reaction is D-xylose(out) = D-xylose(in). With respect to regulation, inhibited by cytochalasin B. Its function is as follows. Sodium-independent facilitative hexose transporter. Can transport D-glucose and D-mannose with high affinity, and D-fructose and D-galactose with low affinity. Can transport D-xylose and D-glucosamine. The sequence is that of Hexose transporter 1 from Toxoplasma gondii.